Here is a 169-residue protein sequence, read N- to C-terminus: Probable phospholipid hydroperoxide glutathione peroxidase (169 aa).

Residue Cys43 is part of the active site.

Belongs to the glutathione peroxidase family.

The protein resides in the cytoplasm. The enzyme catalyses a hydroperoxy polyunsaturated fatty acid + 2 glutathione = a hydroxy polyunsaturated fatty acid + glutathione disulfide + H2O. Protects cells and enzymes from oxidative damage, by catalyzing the reduction of hydrogen peroxide, lipid peroxides and organic hydroperoxide, by glutathione. This is Probable phospholipid hydroperoxide glutathione peroxidase from Nicotiana tabacum (Common tobacco).